We begin with the raw amino-acid sequence, 546 residues long: Cysteine desulfurase SufS (546 aa).

The signal sequence occupies residues 1 to 22 (MLRGPRCLYIYLFFVFLPFSFC). At Lys-291 the chain carries N6-(pyridoxal phosphate)lysine. The active-site Cysteine persulfide intermediate is the Cys-497.

The protein belongs to the class-V pyridoxal-phosphate-dependent aminotransferase family. Csd subfamily. As to quaternary structure, monomer. Interacts with SufE; interaction enhances cysteine desulfurase activity of SufS. It depends on pyridoxal 5'-phosphate as a cofactor. Post-translationally, proteolytically cleaved.

The protein localises to the plastid. It is found in the apicoplast. The catalysed reaction is (sulfur carrier)-H + L-cysteine = (sulfur carrier)-SH + L-alanine. Its pathway is cofactor biosynthesis; iron-sulfur cluster biosynthesis. Functionally, catalyzes sulfur activation and mobilization in sulfur mobilization (SUF) pathway for iron-sulfur (Fe-S) cluster biogenesis. Active when in complex with a partner protein SufE. Required for apicoplast maintenance. Plays a role in the development of sporozoites in oocysts in mosquitoes. May provide sulfur for MNMA-mediated tRNA modifications. This chain is Cysteine desulfurase SufS, found in Plasmodium falciparum (isolate 3D7).